We begin with the raw amino-acid sequence, 3685 residues long: MLWWEEVEDCYEREDVQKKTFTKWVNAQFSKFGKQHIENLFSDLQDGRRLLDLLEGLTGQKLPKEKGSTRVHALNNVNKALRVLQNNNVDLVNIGSTDIVDGNHKLTLGLIWNIILHWQVKNVMKNIMAGLQQTNSEKILLSWVRQSTRNYPQVNVINFTTSWSDGLALNALIHSHRPDLFDWNSVVCQQSATQRLEHAFNIARYQLGIEKLLDPEDVDTTYPDKKSILMYITSLFQVLPQQVSIEAIQEVEMLPRPPKVTKEEHFQLHHQMHYSQQITVSLAQGYERTSSPKPRFKSYAYTQAAYVTTSDPTRSPFPSQHLEAPEDKSFGSSLMESEVNLDRYQTALEEVLSWLLSAEDTLQAQGEISNDVEVVKDQFHTHEGYMMDLTAHQGRVGNILQLGSKLIGTGKLSEDEETEVQEQMNLLNSRWECLRVASMEKQSNLHRVLMDLQNQKLKELNDWLTKTEERTRKMEEEPLGPDLEDLKRQVQQHKVLQEDLEQEQVRVNSLTHMVVVVDESSGDHATAALEEQLKVLGDRWANICRWTEDRWVLLQDILLKWQRLTEEQCLFSAWLSEKEDAVNKIHTTGFKDQNEMLSSLQKLAVLKADLEKKKQSMGKLYSLKQDLLSTLKNKSVTQKTEAWLDNFARCWDNLVQKLEKSTAQISQAVTTTQPSLTQTTVMETVTTVTTREQILVKHAQEELPPPPPQKKRQITVDSEIRKRLDVDITELHSWITRSEAVLQSPEFAIFRKEGNFSDLKEKVNAIEREKAEKFRKLQDASRSAQALVEQMVNEGVNADSIKQASEQLNSRWIEFCQLLSERLNWLEYQNNIIAFYNQLQQLEQMTTTAENWLKIQPTTPSEPTAIKSQLKICKDEVNRLSDLQPQIERLKIQSIALKEKGQGPMFLDADFVAFTNHFKQVFSDVQAREKELQTIFDTLPPMRYQETMSAIRTWVQQSETKLSIPQLSVTDYEIMEQRLGELQALQSSLQEQQSGLYYLSTTVKEMSKKAPSEISRKYQSEFEEIEGRWKKLSSQLVEHCQKLEEQMNKLRKIQNHIQTLKKWMAEVDVFLKEEWPALGDSEILKKQLKQCRLLVSDIQTIQPSLNSVNEGGQKIKNEAEPEFASRLETELKELNTQWDHMCQQVYARKEALKGGLEKTVSLQKDLSEMHEWMTQAEEEYLERDFEYKTPDELQKAVEEMKRAKEEAQQKEAKVKLLTESVNSVIAQAPPVAQEALKKELETLTTNYQWLCTRLNGKCKTLEEVWACWHELLSYLEKANKWLNEVEFKLKTTENIPGGAEEISEVLDSLENLMRHSEDNPNQIRILAQTLTDGGVMDELINEELETFNSRWRELHEEAVRRQKLLEQSIQSAQETEKSLHLIQESLTFIDKQLAAYIADKVDAAQMPQEAQKIQSDLTSHEISLEEMKKHNQGKEAAQRVLSQIDVAQKKLQDVSMKFRLFQKPANFEQRLQESKMILDEVKMHLPALETKSVEQEVVQSQLNHCVNLYKSLSEVKSEVEMVIKTGRQIVQKKQTENPKELDERVTALKLHYNELGAKVTERKQQLEKCLKLSRKMRKEMNVLTEWLAATDMELTKRSAVEGMPSNLDSEVAWGKATQKEIEKQKVHLKSITEVGEALKTVLGKKETLVEDKLSLLNSNWIAVTSRAEEWLNLLLEYQKHMETFDQNVDHITKWIIQADTLLDESEKKKPQQKEDVLKRLKAELNDIRPKVDSTRDQAANLMANRGDHCRKLVEPQISELNHRFAAISHRIKTGKASIPLKELEQFNSDIQKLLEPLEAEIQQGVNLKEEDFNKDMNEDNEGTVKELLQRGDNLQQRITDERKREEIKIKQQLLQTKHNALKDLRSQRRKKALEISHQWYQYKRQADDLLKCLDDIEKKLASLPEPRDERKIKEIDRELQKKKEELNAVRRQAEGLSEDGAAMAVEPTQIQLSKRWREIESKFAQFRRLNFAQIHTVREETMMVMTEDMPLEISYVPSTYLTEITHVSQALLEVEQLLNAPDLCAKDFEDLFKQEESLKNIKDSLQQSSGRIDIIHSKKTAALQSATPVERVKLQEALSQLDFQWEKVNKMYKDRQGRFDRSVEKWRRFHYDIKIFNQWLTEAEQFLRKTQIPENWEHAKYKWYLKELQDGIGQRQTVVRTLNATGEEIIQQSSKTDASILQEKLGSLNLRWQEVCKQLSDRKKRLEEQKNILSEFQRDLNEFVLWLEEADNIASIPLEPGKEQQLKEKLEQVKLLVEELPLRQGILKQLNETGGPVLVSAPISPEEQDKLENKLKQTNLQWIKVSRALPEKQGEIEAQIKDLGQLEKKLEDLEEQLNHLLLWLSPIRNQLEIYNQPNQEGPFDVKETEIAVQAKQPDVEEILSKGQHLYKEKPATQPVKRKLEDLSSEWKAVNRLLQELRAKQPDLAPGLTTIGASPTQTVTLVTQPVVTKETAISKLEMPSSLMLEVPALADFNRAWTELTDWLSLLDQVIKSQRVMVGDLEDINEMIIKQKATMQDLEQRRPQLEELITAAQNLKNKTSNQEARTIITDRIERIQNQWDEVQEHLQNRRQQLNEMLKDSTQWLEAKEEAEQVLGQARAKLESWKEGPYTVDAIQKKITETKQLAKDLRQWQTNVDVANDLALKLLRDYSADDTRKVHMITENINASWRSIHKRVSEREAALEETHRLLQQFPLDLEKFLAWLTEAETTANVLQDATRKERLLEDSKGVKELMKQWQDLQGEIEAHTDVYHNLDENSQKILRSLEGSDDAVLLQRRLDNMNFKWSELRKKSLNIRSHLEASSDQWKRLHLSLQELLVWLQLKDDELSRQAPIGGDFPAVQKQNDVHRAFKRELKTKEPVIMSTLETVRIFLTEQPLEGLEKLYQEPRELPPEERAQNVTRLLRKQAEEVNTEWEKLNLHSADWQRKIDETLERLRELQEATDELDLKLRQAEVIKGSWQPVGDLLIDSLQDHLEKVKALRGEIAPLKENVSHVNDLARQLTTLGIQLSPYNLSTLEDLNTRWKLLQVAVEDRVRQLHEAHRDFGPASQHFLSTSVQGPWERAISPNKVPYYINHETQTTCWDHPKMTELYQSLADLNNVRFSAYRTAMKLRRLQKALCLDLLSLSAACDALDQHNLKQNDQPMDILQIINCLTTIYDRLEQEHNNLVNVPLCVDMCLNWLLNVYDTGRTGRIRVLSFKTGIISLCKAHLEDKYRYLFKQVASSTGFCDQRRLGLLLHDSIQIPRQLGEVASFGGSNIEPSVRSCFQFANNKPEIEAALFLDWMRLEPQSMVWLPVLHRVAAAETAKHQAKCNICKECPIIGFRYRSLKHFNYDICQSCFFSGRVAKGHKMHYPMVEYCTPTTSGEDVRDFAKVLKNKFRTKRYFAKHPRMGYLPVQTVLEGDNMETPVTLINFWPVDSAPASSPQLSHDDTHSRIEHYASRLAEMENSNGSYLNDSISPNESIDDEHLLIQHYCQSLNQDSPLSQPRSPAQILISLESEERGELERILADLEEENRNLQAEYDRLKQQHEHKGLSPLPSPPEMMPTSPQSPRDAELIAEAKLLRQHKGRLEARMQILEDHNKQLESQLHRLRQLLEQPQAEAKVNGTTVSSPSTSLQRSDSSQPMLLRVVGSQTSDSMGEEDLLSPPQDTSTGLEEVMEQLNNSFPSSRGRNTPGKPMREDTM.

An actin-binding region spans residues Met-1–Pro-240. Calponin-homology (CH) domains are found at residues Asp-15 to Gln-119 and Thr-134 to Pro-240. Positions Pro-63–His-72 are ANK2- and ANK-3 binding. Spectrin repeat units lie at residues Val-339 to Arg-447, Val-448 to Asp-556, Leu-559 to Gln-667, Glu-719 to Tyr-828, Asn-830 to Thr-934, Arg-943 to Glu-1045, Asn-1048 to Gly-1154, Glu-1157 to Glu-1263, Ala-1266 to Gln-1367, Ser-1368 to Lys-1463, Glu-1468 to Lys-1568, Lys-1571 to Glu-1676, Lys-1679 to Ile-1778, Pro-1779 to Glu-1874, His-1877 to Glu-1979, Glu-1992 to Arg-2101, Glu-2104 to Glu-2208, Asn-2211 to Ala-2318, Gln-2319 to Lys-2423, Phe-2475 to Glu-2577, Lys-2580 to Glu-2686, Arg-2689 to Ala-2802, Lys-2808 to Asp-2930, and Arg-2935 to Glu-3040. Phosphothreonine is present on Asn-340. Residues Tyr-344 and Leu-348 each carry the phosphoserine modification. A phosphothreonine mark is found at Glu-519, Ser-616, and Ser-629. Residues Ser-1415–Lys-1913 are interaction with SYNM. The region spanning Thr-3055–Met-3088 is the WW domain. Residues Gln-3058–Thr-3408 are interaction with SYNM. A ZZ-type; degenerate zinc finger spans residues Lys-3308–Thr-3364. Cys-3313, Cys-3316, Cys-3337, and Cys-3340 together coordinate Zn(2+). The tract at residues Asp-3466–Arg-3518 is binds to SNTB1. Residues Ser-3483, Ser-3490, and Ser-3500 each carry the phosphoserine modification. Disordered regions lie at residues Lys-3528–Arg-3554 and Glu-3603–Met-3685. Composition is skewed to polar residues over residues Asn-3607–Pro-3626 and Gln-3662–Arg-3673. Phosphoserine occurs at positions 3612, 3613, 3617, 3623, 3624, and 3666.

Interacts with SYNM. Interacts with the syntrophins SNTA1, SNTB1, SNTB2, SNTG1 and SNTG2. Interacts with KRT19. Component of the dystrophin-associated glycoprotein complex which is composed of three subcomplexes: a cytoplasmic complex comprised of DMD (or UTRN), DTNA and a number of syntrophins, such as SNTB1, SNTB2, SNTG1 and SNTG2, the transmembrane dystroglycan complex, and the sarcoglycan-sarcospan complex. Interacts with DAG1 (betaDAG1) with DMD; the interaction is inhibited by phosphorylation on the PPXY motif of DAG1. Interacts with CMYA5. Directly interacts with ANK2 and ANK3; these interactions do not interfere with betaDAG1-binding and are necessary for proper localization in muscle cells. Identified in a dystroglycan complex that contains at least PRX, DRP2, UTRN, DMD and DAG1. Interacts with DTNB. Interacts with PGM5; the interaction is direct. Interacts with NOS1; localizes NOS1 to sarcolemma in muscle cells. Expressed in muscle fibers accumulating in the costameres of myoplasm at the sarcolemma. Expressed in brain, muscle, kidney, lung and testis. Most tissues contain transcripts of multiple isoforms. Isoform 15: Only isoform to be detected in heart and liver and is also expressed in brain, testis and hepatoma cells.

It localises to the cell membrane. The protein localises to the sarcolemma. The protein resides in the cytoplasm. Its subcellular location is the cytoskeleton. It is found in the postsynaptic cell membrane. In terms of biological role, anchors the extracellular matrix to the cytoskeleton via F-actin. Ligand for dystroglycan. Component of the dystrophin-associated glycoprotein complex which accumulates at the neuromuscular junction (NMJ) and at a variety of synapses in the peripheral and central nervous systems and has a structural function in stabilizing the sarcolemma. Also implicated in signaling events and synaptic transmission. The sequence is that of Dystrophin from Homo sapiens (Human).